Reading from the N-terminus, the 145-residue chain is Transcription antitermination protein NusB (145 aa).

Belongs to the NusB family.

Its function is as follows. Involved in transcription antitermination. Required for transcription of ribosomal RNA (rRNA) genes. Binds specifically to the boxA antiterminator sequence of the ribosomal RNA (rrn) operons. The chain is Transcription antitermination protein NusB from Burkholderia lata (strain ATCC 17760 / DSM 23089 / LMG 22485 / NCIMB 9086 / R18194 / 383).